The sequence spans 502 residues: Glycerol kinase (502 aa).

T15 is an ADP binding site. Residues T15, T16, and S17 each contribute to the ATP site. T15 is a sn-glycerol 3-phosphate binding site. R19 contacts ADP. Sn-glycerol 3-phosphate-binding residues include R85, E86, and Y137. 3 residues coordinate glycerol: R85, E86, and Y137. The residue at position 233 (H233) is a Phosphohistidine; by HPr. D247 serves as a coordination point for sn-glycerol 3-phosphate. Residues D247 and Q248 each coordinate glycerol. ADP-binding residues include T269 and G312. Residues T269, G312, Q316, and G413 each contribute to the ATP site. Residues G413 and N417 each coordinate ADP.

Belongs to the FGGY kinase family. Homotetramer and homodimer (in equilibrium). Post-translationally, the phosphoenolpyruvate-dependent sugar phosphotransferase system (PTS), including enzyme I, and histidine-containing protein (HPr) are required for the phosphorylation, which leads to the activation of the enzyme.

It carries out the reaction glycerol + ATP = sn-glycerol 3-phosphate + ADP + H(+). Its pathway is polyol metabolism; glycerol degradation via glycerol kinase pathway; sn-glycerol 3-phosphate from glycerol: step 1/1. Its activity is regulated as follows. Activated by phosphorylation and inhibited by fructose 1,6-bisphosphate (FBP). Functionally, key enzyme in the regulation of glycerol uptake and metabolism. Catalyzes the phosphorylation of glycerol to yield sn-glycerol 3-phosphate. The protein is Glycerol kinase of Streptococcus agalactiae serotype Ia (strain ATCC 27591 / A909 / CDC SS700).